Here is a 146-residue protein sequence, read N- to C-terminus: 3-dehydroquinate dehydratase (146 aa).

Tyrosine 23 functions as the Proton acceptor in the catalytic mechanism. Substrate contacts are provided by asparagine 75, histidine 81, and aspartate 88. Histidine 101 functions as the Proton donor in the catalytic mechanism. Substrate contacts are provided by residues 102-103 and arginine 112; that span reads LS.

Belongs to the type-II 3-dehydroquinase family. As to quaternary structure, homododecamer.

It catalyses the reaction 3-dehydroquinate = 3-dehydroshikimate + H2O. It functions in the pathway metabolic intermediate biosynthesis; chorismate biosynthesis; chorismate from D-erythrose 4-phosphate and phosphoenolpyruvate: step 3/7. Catalyzes a trans-dehydration via an enolate intermediate. This Marinobacter nauticus (strain ATCC 700491 / DSM 11845 / VT8) (Marinobacter aquaeolei) protein is 3-dehydroquinate dehydratase.